We begin with the raw amino-acid sequence, 964 residues long: Glycine dehydrogenase (decarboxylating) (964 aa).

Lys711 is subject to N6-(pyridoxal phosphate)lysine.

Belongs to the GcvP family. In terms of assembly, the glycine cleavage system is composed of four proteins: P, T, L and H. Pyridoxal 5'-phosphate serves as cofactor.

It catalyses the reaction N(6)-[(R)-lipoyl]-L-lysyl-[glycine-cleavage complex H protein] + glycine + H(+) = N(6)-[(R)-S(8)-aminomethyldihydrolipoyl]-L-lysyl-[glycine-cleavage complex H protein] + CO2. Its function is as follows. The glycine cleavage system catalyzes the degradation of glycine. The P protein binds the alpha-amino group of glycine through its pyridoxal phosphate cofactor; CO(2) is released and the remaining methylamine moiety is then transferred to the lipoamide cofactor of the H protein. This chain is Glycine dehydrogenase (decarboxylating), found in Prochlorococcus marinus (strain SARG / CCMP1375 / SS120).